The sequence spans 234 residues: UPF0173 metal-dependent hydrolase RL2074 (234 aa).

Belongs to the UPF0173 family.

The sequence is that of UPF0173 metal-dependent hydrolase RL2074 from Rhizobium johnstonii (strain DSM 114642 / LMG 32736 / 3841) (Rhizobium leguminosarum bv. viciae).